Consider the following 278-residue polypeptide: Probable septum site-determining protein MinC (278 aa).

Positions 104–167 (RTQQSVDPAP…ASHTPAAPQS (64 aa)) are disordered.

Belongs to the MinC family. In terms of assembly, interacts with MinD and FtsZ.

Its function is as follows. Cell division inhibitor that blocks the formation of polar Z ring septums. Rapidly oscillates between the poles of the cell to destabilize FtsZ filaments that have formed before they mature into polar Z rings. Prevents FtsZ polymerization. This is Probable septum site-determining protein MinC from Bordetella avium (strain 197N).